We begin with the raw amino-acid sequence, 154 residues long: 17 kDa surface antigen (154 aa).

A signal peptide spans 1-19; the sequence is MKLLSKIMIIALAASTLQA. The N-palmitoyl cysteine moiety is linked to residue cysteine 20. Cysteine 20 carries S-diacylglycerol cysteine lipidation.

It belongs to the rickettsiale 17 kDa surface antigen family.

The protein localises to the cell outer membrane. The protein is 17 kDa surface antigen (omp) of Rickettsia amblyommatis (Rickettsia amblyommii).